The primary structure comprises 88 residues: Small ribosomal subunit protein uS17 (88 aa).

It belongs to the universal ribosomal protein uS17 family. As to quaternary structure, part of the 30S ribosomal subunit.

Its function is as follows. One of the primary rRNA binding proteins, it binds specifically to the 5'-end of 16S ribosomal RNA. The polypeptide is Small ribosomal subunit protein uS17 (Dechloromonas aromatica (strain RCB)).